The primary structure comprises 249 residues: 5'-nucleotidase SurE (249 aa).

A divalent metal cation is bound by residues aspartate 9, aspartate 10, serine 40, and asparagine 92.

The protein belongs to the SurE nucleotidase family. A divalent metal cation serves as cofactor.

It is found in the cytoplasm. It carries out the reaction a ribonucleoside 5'-phosphate + H2O = a ribonucleoside + phosphate. Nucleotidase that shows phosphatase activity on nucleoside 5'-monophosphates. The sequence is that of 5'-nucleotidase SurE from Shewanella sp. (strain ANA-3).